The sequence spans 63 residues: Probable rubredoxin (63 aa).

Positions 11–62 constitute a Rubredoxin-like domain; the sequence is MKRYKCRVCGYIYDPEKGEPRTDTPPGTPFEDLPETWRCPSCGAKKKMFKPL. Fe cation contacts are provided by Cys16, Cys19, Cys49, and Cys52.

This sequence belongs to the rubredoxin family. Fe(3+) serves as cofactor.

Functionally, rubredoxin is a small nonheme, iron protein lacking acid-labile sulfide. Its single Fe, chelated to 4 Cys, functions as an electron acceptor and may also stabilize the conformation of the molecule. This Methanothermobacter thermautotrophicus (strain ATCC 29096 / DSM 1053 / JCM 10044 / NBRC 100330 / Delta H) (Methanobacterium thermoautotrophicum) protein is Probable rubredoxin.